Reading from the N-terminus, the 797-residue chain is MAP/microtubule affinity-regulating kinase 3 (797 aa).

The segment at 1–35 (MSTRTPLPTVNERDTENHISHGDGRQEVTSRTGRS) is disordered. The segment covering 11-28 (NERDTENHISHGDGRQEV) has biased composition (basic and acidic residues). Position 42 is a phosphoserine (Ser-42). Residues 56–307 (YRLLKTIGKG…LEQIMKDRWI (252 aa)) form the Protein kinase domain. ATP-binding positions include 62-70 (IGKGNFAKV) and Lys-85. Catalysis depends on Asp-178, which acts as the Proton acceptor. Thr-211 is subject to Phosphothreonine; by LKB1. Residues 326-365 (ISDQKRIDIMVGMGYSQEEIQESLSKMKYDEITATYLLLG) enclose the UBA domain. Residues Ser-368, Ser-374, Ser-376, Ser-380, Ser-383, Ser-400, Ser-419, and Ser-469 each carry the phosphoserine modification. Disordered regions lie at residues 372-504 (DASD…GMTR) and 585-701 (PDQR…KPRS). Over residues 374–385 (SDSSSSSNLSLA) the composition is skewed to low complexity. Positions 391 to 400 (SDLSNSTGQS) are enriched in polar residues. 2 stretches are compositionally biased toward polar residues: residues 492-504 (VPSS…GMTR) and 585-602 (PDQR…SATT). Ser-593 and Ser-596 each carry phosphoserine. A Phosphothreonine modification is found at Thr-602. Phosphothreonine; by PKC/PRKCZ is present on Thr-617. Phosphoserine is present on residues Ser-636, Ser-651, and Ser-654. A compositionally biased stretch (polar residues) spans 637-664 (PSLSHEATPLSQTRSRGSTNLFSKLTSK). The segment covering 669–678 (LPTEYERNGR) has biased composition (basic and acidic residues). A Phosphoserine modification is found at Ser-687. The span at 689–699 (EQKDENREAKP) shows a compositional bias: basic and acidic residues. The KA1 domain maps to 748–797 (DGHAESLVQWEMEVCKLPRLSLNGVRFKRISGTSIAFKNIASKIANELKL).

It belongs to the protein kinase superfamily. CAMK Ser/Thr protein kinase family. SNF1 subfamily. In terms of assembly, interacts with MAPT/TAU. Interacts with DLG5 (via coiled-coil domain). Interacts with STK3/MST2 and STK4/MST1 in the presence of DLG5. Interacts with YWHAB, YWHAG, YWHAQ and YWHAZ. Interacts with PKP2 (via N-terminus). Interacts with CDC25C. Interacts with KSR1. Post-translationally, phosphorylated at Thr-211 by STK11/LKB1 in complex with STE20-related adapter-alpha (STRADA) pseudo kinase and CAB39. Phosphorylation at Thr-617 by PRKCZ/aPKC inhibits the kinase activity.

It localises to the cell membrane. The protein localises to the cell projection. Its subcellular location is the dendrite. The protein resides in the cytoplasm. It carries out the reaction L-seryl-[protein] + ATP = O-phospho-L-seryl-[protein] + ADP + H(+). The enzyme catalyses L-threonyl-[protein] + ATP = O-phospho-L-threonyl-[protein] + ADP + H(+). With respect to regulation, activated by phosphorylation on Thr-211. Inhibited by phosphorylation on Thr-617. Serine/threonine-protein kinase. Involved in the specific phosphorylation of microtubule-associated proteins for MAP2 and MAP4. Phosphorylates the microtubule-associated protein MAPT/TAU. Phosphorylates CDC25C on 'Ser-216'. Regulates localization and activity of some histone deacetylases by mediating phosphorylation of HDAC7, promoting subsequent interaction between HDAC7 and 14-3-3 and export from the nucleus. Regulates localization and activity of MITF by mediating its phosphorylation, promoting subsequent interaction between MITF and 14-3-3 and retention in the cytosol. Negatively regulates the Hippo signaling pathway and antagonizes the phosphorylation of LATS1. Cooperates with DLG5 to inhibit the kinase activity of STK3/MST2 toward LATS1. Phosphorylates PKP2 and KSR1. The protein is MAP/microtubule affinity-regulating kinase 3 (Mark3) of Rattus norvegicus (Rat).